Consider the following 149-residue polypeptide: NPC intracellular cholesterol transporter 2 (149 aa).

A signal peptide spans 1 to 21; that stretch reads MRLLVAAFLLLALGDLGPGGA. Disulfide bonds link Cys-27–Cys-140, Cys-42–Cys-47, and Cys-93–Cys-99. A glycan (N-linked (GlcNAc...) asparagine) is linked at Asn-58. An N6-acetyllysine modification is found at Lys-116.

The protein belongs to the NPC2 family. As to quaternary structure, interacts with NPC1 (via the second lumenal domain) in a cholestrol-dependent manner. Interacts with NUS1/NgBR, the interaction stabilizes NCP2 and regulates cholesterol trafficking. Interacts with DHDDS. Interacts with NEDD4L (via C2 domain). Interacts with NPC1L1. As to expression, epididymis. High levels are found in the caput and corpus regions. Weaker levels in the distal cauda and in the efferent ducts.

The protein resides in the secreted. It localises to the endoplasmic reticulum. Its subcellular location is the lysosome. It carries out the reaction cholesterol(in) = cholesterol(out). Intracellular cholesterol transporter which acts in concert with NPC1 and plays an important role in the egress of cholesterol from the lysosomal compartment. Unesterified cholesterol that has been released from LDLs in the lumen of the late endosomes/lysosomes is transferred by NPC2 to the cholesterol-binding pocket in the N-terminal domain of NPC1. May bind and mobilize cholesterol that is associated with membranes. NPC2 binds cholesterol with a 1:1 stoichiometry. Can bind a variety of sterols, including lathosterol, desmosterol and the plant sterols stigmasterol and beta-sitosterol. The secreted form of NCP2 regulates biliary cholesterol secretion via stimulation of ABCG5/ABCG8-mediated cholesterol transport. This Canis lupus familiaris (Dog) protein is NPC intracellular cholesterol transporter 2.